Here is a 188-residue protein sequence, read N- to C-terminus: UPF0461 protein C5orf24 (188 aa).

The segment covering 1–10 has biased composition (polar residues); the sequence is MMHPVASSNP. The segment at 1-20 is disordered; sequence MMHPVASSNPAFCGPGKPSC. Ser37 is subject to Phosphoserine. Lys75 is covalently cross-linked (Glycyl lysine isopeptide (Lys-Gly) (interchain with G-Cter in SUMO2)). A disordered region spans residues 79-142; sequence KKKKNLNRSG…GYKVSPGRPP (64 aa). Residues 80–92 are compositionally biased toward basic residues; it reads KKKNLNRSGKRGR. Over residues 94 to 107 the composition is skewed to polar residues; sequence SGTTKSAGYRTSTG. Phosphoserine is present on residues Ser121 and Ser180. Residue Lys184 forms a Glycyl lysine isopeptide (Lys-Gly) (interchain with G-Cter in SUMO2) linkage.

Belongs to the UPF0461 family.

The polypeptide is UPF0461 protein C5orf24 (C5orf24) (Homo sapiens (Human)).